Here is a 339-residue protein sequence, read N- to C-terminus: Protein pelota homolog (339 aa).

Belongs to the eukaryotic release factor 1 family. Pelota subfamily. In terms of assembly, monomer. It depends on a divalent metal cation as a cofactor.

It localises to the cytoplasm. Its function is as follows. May function in recognizing stalled ribosomes, interact with stem-loop structures in stalled mRNA molecules, and effect endonucleolytic cleavage of the mRNA. May play a role in the release non-functional ribosomes and degradation of damaged mRNAs. Has endoribonuclease activity. This is Protein pelota homolog from Picrophilus torridus (strain ATCC 700027 / DSM 9790 / JCM 10055 / NBRC 100828 / KAW 2/3).